Consider the following 454-residue polypeptide: Bifunctional protein GlmU (454 aa).

Residues 1–227 (MTQLSVVILA…FMEVEGANNR (227 aa)) are pyrophosphorylase. Residues 9-12 (LAAG), lysine 23, glutamine 74, 79-80 (GT), 101-103 (YGD), glycine 138, glutamate 152, asparagine 167, and asparagine 225 contribute to the UDP-N-acetyl-alpha-D-glucosamine site. Aspartate 103 is a binding site for Mg(2+). Asparagine 225 lines the Mg(2+) pocket. A linker region spans residues 228–248 (LQLAALERFYQKTQAEKLLLA). The interval 249–454 (GVRLIDPARF…QGWQRPTKKK (206 aa)) is N-acetyltransferase. UDP-N-acetyl-alpha-D-glucosamine contacts are provided by arginine 331 and lysine 349. Histidine 361 acts as the Proton acceptor in catalysis. Positions 364 and 375 each coordinate UDP-N-acetyl-alpha-D-glucosamine. Residues alanine 378, 384–385 (NY), serine 403, alanine 421, and arginine 438 each bind acetyl-CoA.

The protein in the N-terminal section; belongs to the N-acetylglucosamine-1-phosphate uridyltransferase family. In the C-terminal section; belongs to the transferase hexapeptide repeat family. As to quaternary structure, homotrimer. Mg(2+) is required as a cofactor.

It localises to the cytoplasm. The catalysed reaction is alpha-D-glucosamine 1-phosphate + acetyl-CoA = N-acetyl-alpha-D-glucosamine 1-phosphate + CoA + H(+). It carries out the reaction N-acetyl-alpha-D-glucosamine 1-phosphate + UTP + H(+) = UDP-N-acetyl-alpha-D-glucosamine + diphosphate. Its pathway is nucleotide-sugar biosynthesis; UDP-N-acetyl-alpha-D-glucosamine biosynthesis; N-acetyl-alpha-D-glucosamine 1-phosphate from alpha-D-glucosamine 6-phosphate (route II): step 2/2. The protein operates within nucleotide-sugar biosynthesis; UDP-N-acetyl-alpha-D-glucosamine biosynthesis; UDP-N-acetyl-alpha-D-glucosamine from N-acetyl-alpha-D-glucosamine 1-phosphate: step 1/1. It participates in bacterial outer membrane biogenesis; LPS lipid A biosynthesis. Catalyzes the last two sequential reactions in the de novo biosynthetic pathway for UDP-N-acetylglucosamine (UDP-GlcNAc). The C-terminal domain catalyzes the transfer of acetyl group from acetyl coenzyme A to glucosamine-1-phosphate (GlcN-1-P) to produce N-acetylglucosamine-1-phosphate (GlcNAc-1-P), which is converted into UDP-GlcNAc by the transfer of uridine 5-monophosphate (from uridine 5-triphosphate), a reaction catalyzed by the N-terminal domain. This is Bifunctional protein GlmU from Actinobacillus pleuropneumoniae serotype 3 (strain JL03).